The primary structure comprises 294 residues: MSTASSSSSLPRNPVGGHVPVAGGLHSVGLSYARELKAEAVQVFVANPRGWATPAGNPKQDEAFREACAAGSVPAYVHAPYLINFGSHTGATVERSVESLRHSLRRGRAIGALGVVVHTGSATGGRERPVALKQVREHMLPLLDELTHDDDPYLLLESTAGQGASLCSRTWDFGPYFEALDAHPKLGVCLDTCHIFAAGHDLTGPSGMHQTLDLLVDTVGEGRLRLIHANDSKDVAGAHKDRHENIGAGHIGEDPFRALMTHPATDGVPLVIETPGGKEGHAADVARLKKLRDG.

Zn(2+)-binding residues include His-78, His-118, Glu-157, Asp-191, His-194, His-228, Asp-241, His-243, and Glu-273.

The protein belongs to the AP endonuclease 2 family. The cofactor is Zn(2+).

It catalyses the reaction Endonucleolytic cleavage to 5'-phosphooligonucleotide end-products.. In terms of biological role, endonuclease IV plays a role in DNA repair. It cleaves phosphodiester bonds at apurinic or apyrimidinic (AP) sites, generating a 3'-hydroxyl group and a 5'-terminal sugar phosphate. The protein is Probable endonuclease 4 of Streptomyces coelicolor (strain ATCC BAA-471 / A3(2) / M145).